Consider the following 190-residue polypeptide: dCTP deaminase (190 aa).

DCTP-binding positions include 113–118 (KSTYAR), 137–139 (TLE), Gln158, Tyr172, and Gln182. The active-site Proton donor/acceptor is Glu139.

The protein belongs to the dCTP deaminase family. Homotrimer.

It carries out the reaction dCTP + H2O + H(+) = dUTP + NH4(+). The protein operates within pyrimidine metabolism; dUMP biosynthesis; dUMP from dCTP (dUTP route): step 1/2. Functionally, catalyzes the deamination of dCTP to dUTP. This is dCTP deaminase from Chromobacterium violaceum (strain ATCC 12472 / DSM 30191 / JCM 1249 / CCUG 213 / NBRC 12614 / NCIMB 9131 / NCTC 9757 / MK).